A 445-amino-acid polypeptide reads, in one-letter code: POU domain, class 5, transcription factor 1.2 (445 aa).

Polar residues-rich tracts occupy residues 76 to 88 and 164 to 182; these read SANQ…QGNP and IFTS…SLDN. 2 disordered regions span residues 76–116 and 139–227; these read SANQ…PSLP and TTVV…GEME. The segment covering 183-200 has biased composition (low complexity); sequence SRCSSATSSSSGGTNVGT. In terms of domain architecture, POU-specific spans 218 to 292; it reads EEAPNSGEME…LLRSWLHEVE (75 aa). A DNA-binding region (homeobox) is located at residues 312-371; sequence KRKHRTSIENNVKCTLENYFMQCSKPSAQEIAQIARELNMEKDVVRVWFCNRRQKGKRQV.

Belongs to the POU transcription factor family. Class-5 subfamily. As to quaternary structure, interacts with the transcription factors tcf7l1/tcf3 and vegt. In terms of tissue distribution, initially (stage 9) expressed in all regions of the embryo, becoming localized to the ventroposterior regions by early neurula stages. In adults, expressed at a low level in the brain.

The protein resides in the nucleus. Its function is as follows. Transcription factor that binds to the octamer motif (5'-ATTTGCAT-3'). Antagonizes the activity of nodal/activin signaling during gastrulation to suppress mesendoderm formation. The chain is POU domain, class 5, transcription factor 1.2 (pou5f1.2) from Xenopus laevis (African clawed frog).